The following is a 140-amino-acid chain: Trafficking protein particle complex subunit 2-like protein (140 aa).

It belongs to the TRAPP small subunits family. Sedlin subfamily.

The sequence is that of Trafficking protein particle complex subunit 2-like protein (trappc2l) from Dictyostelium discoideum (Social amoeba).